The primary structure comprises 303 residues: Glutamyl-Q tRNA(Asp) synthetase (303 aa).

L-glutamate-binding positions include 16-20 (RFAPS) and Glu-52. The 'HIGH' region signature appears at 19–29 (PSPSGPLHFGS). Zn(2+) is bound by residues Cys-108, Cys-110, Tyr-122, and Cys-126. Residues Tyr-177 and Arg-195 each coordinate L-glutamate. The short motif at 233–237 (KLSKQ) is the 'KMSKS' region element. Lys-236 lines the ATP pocket.

The protein belongs to the class-I aminoacyl-tRNA synthetase family. GluQ subfamily. Zn(2+) is required as a cofactor.

Functionally, catalyzes the tRNA-independent activation of glutamate in presence of ATP and the subsequent transfer of glutamate onto a tRNA(Asp). Glutamate is transferred on the 2-amino-5-(4,5-dihydroxy-2-cyclopenten-1-yl) moiety of the queuosine in the wobble position of the QUC anticodon. This is Glutamyl-Q tRNA(Asp) synthetase from Vibrio vulnificus (strain CMCP6).